A 602-amino-acid polypeptide reads, in one-letter code: MKHIRNFSIIAHIDHGKSTLADRLIERCGGLADRQMQAQVLDSMDLEKERGITIKAQTAALQYQARDGQVYQLNLIDTPGHVDFSYEVSRSLSACEGALLVVDASQGVEAQTVANCYTALELGVEVVPVLNKMDLPNADPDNAKAEIEDVIGIDATDAIPCSAKTGMGIDDILQAIVAKVPAPRGQADGPLRAMIIDSWFDSYVGVVMLVRVVDGRLLKGERIKMMASGAVYNADGLGVFTPANEPRDALAAGQVGYVIAGIKELQAAKVGDTITLEKKLPNNAGPAAQALPGFKEIQPQVFAGLYPTEASAYDSLRDALEKLKLNDASLHYEPEVSQALGFGFRCGFLGLLHMEIVQERLEREFDQDLITTAPSVVYQVVKADGQVLMVENPSKMPDQGRLSEIREPIVTVHLYMPQDYVGPVMTLANQKRGVQMNMAYHGRQVMLTYDMPLGEIVLDFFDKLKSVSRGYASMDYTFKEYRASDVVKVDILLNGDKVDALSIIVHRSQSQHRGRAVVAKMREIISRQMYDVAIQAAIGANIIARETIKALRKNVLAKCYGGDITRKRKLLEKQKAGKKRMKQIGSVEVPQEAFLAILQVQE.

Residues 2–184 (KHIRNFSIIA…AIVAKVPAPR (183 aa)) form the tr-type G domain. GTP-binding positions include 14–19 (DHGKST) and 131–134 (NKMD).

Belongs to the TRAFAC class translation factor GTPase superfamily. Classic translation factor GTPase family. LepA subfamily.

It is found in the cell inner membrane. It carries out the reaction GTP + H2O = GDP + phosphate + H(+). Required for accurate and efficient protein synthesis under certain stress conditions. May act as a fidelity factor of the translation reaction, by catalyzing a one-codon backward translocation of tRNAs on improperly translocated ribosomes. Back-translocation proceeds from a post-translocation (POST) complex to a pre-translocation (PRE) complex, thus giving elongation factor G a second chance to translocate the tRNAs correctly. Binds to ribosomes in a GTP-dependent manner. The chain is Elongation factor 4 from Verminephrobacter eiseniae (strain EF01-2).